Here is a 124-residue protein sequence, read N- to C-terminus: Fluoride-specific ion channel FluC 2 (124 aa).

4 helical membrane passes run 8-28 (LPNQWNEMWLVAFGAVPGALV), 34-54 (NDLLVNVIGAAILGLVVGLPF), 60-80 (LLLGVGFCGSLTTFSSWMVEC), and 93-113 (LGLIGLTMGLGLGVAALGFLI). Na(+) contacts are provided by Gly-68 and Thr-71.

The protein belongs to the fluoride channel Fluc/FEX (TC 1.A.43) family.

It localises to the cell inner membrane. The catalysed reaction is fluoride(in) = fluoride(out). Na(+) is not transported, but it plays an essential structural role and its presence is essential for fluoride channel function. In terms of biological role, fluoride-specific ion channel. Important for reducing fluoride concentration in the cell, thus reducing its toxicity. In Prochlorococcus marinus (strain MIT 9313), this protein is Fluoride-specific ion channel FluC 2.